The sequence spans 334 residues: Aspartate carbamoyltransferase catalytic subunit (334 aa).

Positions 71 and 72 each coordinate carbamoyl phosphate. K99 provides a ligand contact to L-aspartate. Carbamoyl phosphate contacts are provided by R121, H151, and Q154. L-aspartate is bound by residues R184 and R239. Carbamoyl phosphate is bound by residues G280 and P281.

Belongs to the aspartate/ornithine carbamoyltransferase superfamily. ATCase family. As to quaternary structure, heterododecamer (2C3:3R2) of six catalytic PyrB chains organized as two trimers (C3), and six regulatory PyrI chains organized as three dimers (R2).

The catalysed reaction is carbamoyl phosphate + L-aspartate = N-carbamoyl-L-aspartate + phosphate + H(+). It functions in the pathway pyrimidine metabolism; UMP biosynthesis via de novo pathway; (S)-dihydroorotate from bicarbonate: step 2/3. Catalyzes the condensation of carbamoyl phosphate and aspartate to form carbamoyl aspartate and inorganic phosphate, the committed step in the de novo pyrimidine nucleotide biosynthesis pathway. The sequence is that of Aspartate carbamoyltransferase catalytic subunit from Pseudomonas putida (strain GB-1).